Here is a 295-residue protein sequence, read N- to C-terminus: Glucose-1-phosphate thymidylyltransferase (295 aa).

The Mg(2+) site is built by Asp-111 and Asp-226.

The protein belongs to the glucose-1-phosphate thymidylyltransferase family. Homotetramer. Mg(2+) is required as a cofactor.

The enzyme catalyses dTTP + alpha-D-glucose 1-phosphate + H(+) = dTDP-alpha-D-glucose + diphosphate. It participates in carbohydrate biosynthesis; dTDP-L-rhamnose biosynthesis. It functions in the pathway bacterial outer membrane biogenesis; LPS O-antigen biosynthesis. In terms of biological role, catalyzes the formation of dTDP-glucose, from dTTP and glucose 1-phosphate, as well as its pyrophosphorolysis. The polypeptide is Glucose-1-phosphate thymidylyltransferase (rmlA) (Xanthomonas campestris pv. campestris (strain B100)).